We begin with the raw amino-acid sequence, 171 residues long: 3-hydroxydecanoyl-[acyl-carrier-protein] dehydratase (171 aa).

The active site involves His70.

Belongs to the thioester dehydratase family. FabA subfamily. Homodimer.

The protein resides in the cytoplasm. The enzyme catalyses a (3R)-hydroxyacyl-[ACP] = a (2E)-enoyl-[ACP] + H2O. It catalyses the reaction (3R)-hydroxydecanoyl-[ACP] = (2E)-decenoyl-[ACP] + H2O. The catalysed reaction is (2E)-decenoyl-[ACP] = (3Z)-decenoyl-[ACP]. It functions in the pathway lipid metabolism; fatty acid biosynthesis. Its function is as follows. Necessary for the introduction of cis unsaturation into fatty acids. Catalyzes the dehydration of (3R)-3-hydroxydecanoyl-ACP to E-(2)-decenoyl-ACP and then its isomerization to Z-(3)-decenoyl-ACP. Can catalyze the dehydratase reaction for beta-hydroxyacyl-ACPs with saturated chain lengths up to 16:0, being most active on intermediate chain length. The sequence is that of 3-hydroxydecanoyl-[acyl-carrier-protein] dehydratase from Pseudomonas syringae pv. syringae (strain B728a).